Consider the following 332-residue polypeptide: Cell division protein ZipA (332 aa).

The Periplasmic portion of the chain corresponds to 1-6; it reads MMQDLR. The chain crosses the membrane as a helical span at residues 7 to 27; the sequence is LILIVVGAIAIIALLLHGLWT. Over 28 to 332 the chain is Cytoplasmic; the sequence is SRKERSSLFR…RLREVLENNA (305 aa). Composition is skewed to basic and acidic residues over residues 34–51 and 61–72; these read SLFRDRPAKRSKKEREQS and GEVRVRSAHPED. Positions 34-184 are disordered; sequence SLFRDRPAKR…PAVAHEPQPA (151 aa). Residues 98–107 are compositionally biased toward low complexity; that stretch reads PAPRAVQPAA. A compositionally biased stretch (acidic residues) spans 121–136; sequence DDILLDNYAQEEDDEP. A compositionally biased stretch (low complexity) spans 155 to 171; it reads PAAEPAFHAEPAHQPQP.

It belongs to the ZipA family. In terms of assembly, interacts with FtsZ via their C-terminal domains.

Its subcellular location is the cell inner membrane. In terms of biological role, essential cell division protein that stabilizes the FtsZ protofilaments by cross-linking them and that serves as a cytoplasmic membrane anchor for the Z ring. Also required for the recruitment to the septal ring of downstream cell division proteins. The polypeptide is Cell division protein ZipA (Serratia proteamaculans (strain 568)).